The primary structure comprises 412 residues: Serine hydroxymethyltransferase (412 aa).

Residues Leu-121 and Gly-125–Leu-127 each bind (6S)-5,6,7,8-tetrahydrofolate. Lys-230 is modified (N6-(pyridoxal phosphate)lysine). (6S)-5,6,7,8-tetrahydrofolate is bound at residue Thr-353–Phe-355.

It belongs to the SHMT family. As to quaternary structure, homodimer. It depends on pyridoxal 5'-phosphate as a cofactor.

It localises to the cytoplasm. The catalysed reaction is (6R)-5,10-methylene-5,6,7,8-tetrahydrofolate + glycine + H2O = (6S)-5,6,7,8-tetrahydrofolate + L-serine. The protein operates within one-carbon metabolism; tetrahydrofolate interconversion. Its pathway is amino-acid biosynthesis; glycine biosynthesis; glycine from L-serine: step 1/1. Functionally, catalyzes the reversible interconversion of serine and glycine with tetrahydrofolate (THF) serving as the one-carbon carrier. This reaction serves as the major source of one-carbon groups required for the biosynthesis of purines, thymidylate, methionine, and other important biomolecules. Also exhibits THF-independent aldolase activity toward beta-hydroxyamino acids, producing glycine and aldehydes, via a retro-aldol mechanism. The polypeptide is Serine hydroxymethyltransferase (Finegoldia magna (strain ATCC 29328 / DSM 20472 / WAL 2508) (Peptostreptococcus magnus)).